Here is a 116-residue protein sequence, read N- to C-terminus: Beta-2-microglobulin (116 aa).

An N-terminal signal peptide occupies residues 1–19; sequence MRALITFALLCLLYITVQG. The Ig-like C1-type domain maps to 24 to 111; it reads PKVHVYSHFP…RHMKETKKFS (88 aa). The cysteines at positions 44 and 99 are disulfide-linked.

This sequence belongs to the beta-2-microglobulin family. As to quaternary structure, heterodimer of an alpha chain and a beta chain. Beta-2-microglobulin is the beta-chain of major histocompatibility complex class I molecules.

The protein resides in the secreted. In terms of biological role, component of the class I major histocompatibility complex (MHC). Involved in the presentation of peptide antigens to the immune system. In Danio rerio (Zebrafish), this protein is Beta-2-microglobulin (b2m).